Here is a 185-residue protein sequence, read N- to C-terminus: CDP-diacylglycerol--glycerol-3-phosphate 3-phosphatidyltransferase (185 aa).

A run of 4 helical transmembrane segments spans residues 7–26, 33–52, 89–108, and 151–172; these read IFLTIFRVILIPFFVIAFYL, FITTLIFFIAGVTDWLDGYL, FWITIPAIIMISREIIISAL, and IAAIILLYIAAILTIWSMIQYL.

It belongs to the CDP-alcohol phosphatidyltransferase class-I family.

It localises to the cell membrane. The catalysed reaction is a CDP-1,2-diacyl-sn-glycerol + sn-glycerol 3-phosphate = a 1,2-diacyl-sn-glycero-3-phospho-(1'-sn-glycero-3'-phosphate) + CMP + H(+). It participates in phospholipid metabolism; phosphatidylglycerol biosynthesis; phosphatidylglycerol from CDP-diacylglycerol: step 1/2. This protein catalyzes the committed step to the synthesis of the acidic phospholipids. This chain is CDP-diacylglycerol--glycerol-3-phosphate 3-phosphatidyltransferase (pgsA), found in Haemophilus influenzae (strain ATCC 51907 / DSM 11121 / KW20 / Rd).